A 584-amino-acid chain; its full sequence is Protein BONZAI 3 (584 aa).

The segment at 1–23 is disordered; sequence MGGCLSGDVKGGKQAIGGVQQRP. Residue G2 is the site of N-myristoyl glycine attachment. C2 domains lie at 34–167 and 178–305; these read HNDA…TLTL and NRNL…NFVY. Positions 67, 73, 126, 128, and 145 each coordinate Ca(2+). The VWFA domain occupies 344–563; it reads NFMVAVDFTA…SVVQALLEEL (220 aa).

This sequence belongs to the copine family. As to quaternary structure, interacts with BAP1 and BAP2. Ca(2+) serves as cofactor. Expressed at an extremely low level.

The protein localises to the cell membrane. Functionally, negative regulator of cell death and defense responses. Repress a number of R genes and may have effects in promoting growth and development. May function in membrane trafficking and in fusion of vesicles with plasma membrane. This chain is Protein BONZAI 3 (BON3), found in Arabidopsis thaliana (Mouse-ear cress).